The primary structure comprises 449 residues: MREVISIHVGQGGIQVGNACWELFCLEHGIQPDGQMPSDKTIGGGDDAFNTFFSETGAGKHVPRAVFLDLEPTVIDEVRTGTYRQLFHPEQLISGKEDAANNFARGHYTIGKEIVDLCLDRIRKLADNCTGLQGFLVFNSVGGGTGSGLGSLLLERLSVDYGKKSKLGFTIYPSPQVSTAVVEPYNSILSTHSLLEHTDVAVMLDNEAIYDICRRNLDIERPTYTNLNRLIAQVISSLTASLRFDGALNVDITEFQTNLVPYPRIHFMLSSYAPIISAEKAYHEQLSVAEITNSAFEPANMMAKCDPRHGKYMACSMMYRGDVVPKDVNASIATIKTKRTIQFVDWCPTGFKVGINYQPSTVVPGGDLAKVMRAVCMISNSTAIAEVFSRLDHKFDLMYAKRAFVHWYVGEGMEEGEFSEAREDLAALEKDYEEVGIETAEGEGEEEGY.

Gln11 serves as a coordination point for GTP. Position 40 is an N6-acetyllysine (Lys40). 7 residues coordinate GTP: Glu71, Ser140, Gly144, Thr145, Thr179, Asn206, and Asn228. Residue Glu71 coordinates Mg(2+). Glu254 is an active-site residue.

It belongs to the tubulin family. In terms of assembly, dimer of alpha and beta chains. A typical microtubule is a hollow water-filled tube with an outer diameter of 25 nm and an inner diameter of 15 nM. Alpha-beta heterodimers associate head-to-tail to form protofilaments running lengthwise along the microtubule wall with the beta-tubulin subunit facing the microtubule plus end conferring a structural polarity. Microtubules usually have 13 protofilaments but different protofilament numbers can be found in some organisms and specialized cells. It depends on Mg(2+) as a cofactor. In terms of processing, undergoes a tyrosination/detyrosination cycle, the cyclic removal and re-addition of a C-terminal tyrosine residue by the enzymes tubulin tyrosine carboxypeptidase (TTCP) and tubulin tyrosine ligase (TTL), respectively. Post-translationally, acetylation of alpha chains at Lys-40 stabilizes microtubules and affects affinity and processivity of microtubule motors. This modification has a role in multiple cellular functions, ranging from cell motility, cell cycle progression or cell differentiation to intracellular trafficking and signaling.

The protein resides in the cytoplasm. The protein localises to the cytoskeleton. The catalysed reaction is GTP + H2O = GDP + phosphate + H(+). In terms of biological role, tubulin is the major constituent of microtubules, a cylinder consisting of laterally associated linear protofilaments composed of alpha- and beta-tubulin heterodimers. Microtubules grow by the addition of GTP-tubulin dimers to the microtubule end, where a stabilizing cap forms. Below the cap, tubulin dimers are in GDP-bound state, owing to GTPase activity of alpha-tubulin. The chain is Tubulin alpha chain from Tetrahymena pyriformis.